A 707-amino-acid polypeptide reads, in one-letter code: Alpha-hemolysin translocation ATP-binding protein HlyB (707 aa).

The 123-residue stretch at serine 3 to isoleucine 125 folds into the Peptidase C39 domain. Histidine 83 is an active-site residue. Residues phenylalanine 154–glutamine 436 form the ABC transmembrane type-1 domain. 5 consecutive transmembrane segments (helical) span residues leucine 158 to valine 178, leucine 191 to leucine 211, alanine 269 to tyrosine 289, leucine 295 to leucine 315, and valine 388 to glycine 408. An ABC transporter domain is found at isoleucine 468–glutamine 703. An ATP-binding site is contributed by glycine 502 to serine 509.

Belongs to the ABC transporter superfamily. Protein-1 exporter (TC 3.A.1.109) family. In terms of assembly, homodimer.

The protein resides in the cell inner membrane. Its function is as follows. Part of the ABC transporter complex HlyBD involved in hemolysin export. Transmembrane domains (TMD) form a pore in the inner membrane and the ATP-binding domain (NBD) is responsible for energy generation. This chain is Alpha-hemolysin translocation ATP-binding protein HlyB (hlyB), found in Escherichia coli O6:H1 (strain CFT073 / ATCC 700928 / UPEC).